A 304-amino-acid chain; its full sequence is C-type lectin domain family 10 member A (304 aa).

At 1 to 35 (MIYENLQNSRIEEKTQEPGKAPSQSFLWRILSWTH) the chain is on the cytoplasmic side. Residues 36-56 (LLLFSLGLSLLLLVVVSVIGS) form a helical; Signal-anchor for type II membrane protein membrane-spanning segment. Residues 57–304 (QNSQLRRDLG…ICEMKLAKES (248 aa)) are Extracellular-facing. N-linked (GlcNAc...) asparagine glycans are attached at residues Asn-74 and Asn-166. One can recognise a C-type lectin domain in the interval 172 to 298 (CCPLHWTEHE…QRTFRWICEM (127 aa)). 3 disulfide bridges follow: Cys-173-Cys-184, Cys-201-Cys-296, and Cys-274-Cys-288.

In terms of assembly, homooligomer. Interacts with SIGLEC1, which may act as a counter-receptor for CLEC10A in lymph node. Detected in lymph node in the subcapsular sinus, interfollicular regions, T and B-cell boundary and in the areas surrounding high endothelial venules (at protein level). Expressed on the surface of activated macrophages. Expressed in heart, lung, testis, skeletal muscle, spleen, brain, kidney and thymus. Expressed in P388, RAW 264.7 and M1 cell lines.

It localises to the membrane. Its function is as follows. Recognizes terminal galactose and N-acetylgalactosamine units. May participate in the interaction between tumoricidal macrophages and tumor cells. Plays a role in the recruitment of inflammatory monocytes to adipose tissue in diet-induced obesity. In Mus musculus (Mouse), this protein is C-type lectin domain family 10 member A (Clec10a).